The following is a 190-amino-acid chain: Imidazoleglycerol-phosphate dehydratase (190 aa).

Belongs to the imidazoleglycerol-phosphate dehydratase family.

It localises to the cytoplasm. The enzyme catalyses D-erythro-1-(imidazol-4-yl)glycerol 3-phosphate = 3-(imidazol-4-yl)-2-oxopropyl phosphate + H2O. It participates in amino-acid biosynthesis; L-histidine biosynthesis; L-histidine from 5-phospho-alpha-D-ribose 1-diphosphate: step 6/9. The chain is Imidazoleglycerol-phosphate dehydratase from Methanococcus maripaludis (strain DSM 14266 / JCM 13030 / NBRC 101832 / S2 / LL).